Here is an 877-residue protein sequence, read N- to C-terminus: Alanine--tRNA ligase (877 aa).

His-567, His-571, Cys-669, and His-673 together coordinate Zn(2+).

It belongs to the class-II aminoacyl-tRNA synthetase family. Zn(2+) serves as cofactor.

It is found in the cytoplasm. It catalyses the reaction tRNA(Ala) + L-alanine + ATP = L-alanyl-tRNA(Ala) + AMP + diphosphate. Its function is as follows. Catalyzes the attachment of alanine to tRNA(Ala) in a two-step reaction: alanine is first activated by ATP to form Ala-AMP and then transferred to the acceptor end of tRNA(Ala). Also edits incorrectly charged Ser-tRNA(Ala) and Gly-tRNA(Ala) via its editing domain. In Rickettsia bellii (strain RML369-C), this protein is Alanine--tRNA ligase.